A 453-amino-acid chain; its full sequence is tRNA-2-methylthio-N(6)-dimethylallyladenosine synthase (453 aa).

The region spanning 17-135 is the MTTase N-terminal domain; it reads GTFFIETWGC…FPEYLNRAKQ (119 aa). Cys-26, Cys-62, Cys-96, Cys-172, Cys-176, and Cys-179 together coordinate [4Fe-4S] cluster. The 231-residue stretch at 158–388 folds into the Radical SAM core domain; it reads RKSSTKAFVT…VEVVNKSCEK (231 aa). The 63-residue stretch at 391–453 folds into the TRAM domain; the sequence is KKYQDRIVKV…LSFSLEGEEV (63 aa).

It belongs to the methylthiotransferase family. MiaB subfamily. Monomer. Requires [4Fe-4S] cluster as cofactor.

It is found in the cytoplasm. It carries out the reaction N(6)-dimethylallyladenosine(37) in tRNA + (sulfur carrier)-SH + AH2 + 2 S-adenosyl-L-methionine = 2-methylsulfanyl-N(6)-dimethylallyladenosine(37) in tRNA + (sulfur carrier)-H + 5'-deoxyadenosine + L-methionine + A + S-adenosyl-L-homocysteine + 2 H(+). Catalyzes the methylthiolation of N6-(dimethylallyl)adenosine (i(6)A), leading to the formation of 2-methylthio-N6-(dimethylallyl)adenosine (ms(2)i(6)A) at position 37 in tRNAs that read codons beginning with uridine. The chain is tRNA-2-methylthio-N(6)-dimethylallyladenosine synthase from Clostridium tetani (strain Massachusetts / E88).